Reading from the N-terminus, the 209-residue chain is LexA repressor (209 aa).

A DNA-binding region (H-T-H motif) is located at residues 29–49; sequence VREIGSAIGLSSTSTVHGHID. Active-site for autocatalytic cleavage activity residues include serine 130 and lysine 168.

The protein belongs to the peptidase S24 family. Homodimer.

It catalyses the reaction Hydrolysis of Ala-|-Gly bond in repressor LexA.. Functionally, represses a number of genes involved in the response to DNA damage (SOS response), including recA and lexA. In the presence of single-stranded DNA, RecA interacts with LexA causing an autocatalytic cleavage which disrupts the DNA-binding part of LexA, leading to derepression of the SOS regulon and eventually DNA repair. This is LexA repressor from Pediococcus pentosaceus (strain ATCC 25745 / CCUG 21536 / LMG 10740 / 183-1w).